Consider the following 274-residue polypeptide: Penicillin-insensitive murein endopeptidase (274 aa).

Residues 1–19 (MNKTAIALLALLASSVSLA) form the signal peptide. Cystine bridges form between Cys44/Cys265, Cys187/Cys235, and Cys216/Cys223. Zn(2+)-binding residues include His110, His113, Asp120, Asp147, His150, and His211. Positions 227–274 (PLPPPGDGCGAELQSWFEPPKPGTTKPEKKTPPPLPPSCQALLDEHVI) are disordered.

The protein belongs to the peptidase M74 family. As to quaternary structure, dimer. Zn(2+) is required as a cofactor.

It localises to the periplasm. Functionally, murein endopeptidase that cleaves the D-alanyl-meso-2,6-diamino-pimelyl amide bond that connects peptidoglycan strands. Likely plays a role in the removal of murein from the sacculus. The polypeptide is Penicillin-insensitive murein endopeptidase (Escherichia coli O157:H7).